The sequence spans 389 residues: tRNA-specific 2-thiouridylase MnmA (389 aa).

Residues 21–28 (AMSGGVDS) and Leu47 contribute to the ATP site. The active-site Nucleophile is the Cys115. Cys115 and Cys212 form a disulfide bridge. An ATP-binding site is contributed by Gly139. The segment at 162 to 164 (RDQ) is interaction with tRNA. Cys212 acts as the Cysteine persulfide intermediate in catalysis.

Belongs to the MnmA/TRMU family.

Its subcellular location is the cytoplasm. It carries out the reaction S-sulfanyl-L-cysteinyl-[protein] + uridine(34) in tRNA + AH2 + ATP = 2-thiouridine(34) in tRNA + L-cysteinyl-[protein] + A + AMP + diphosphate + H(+). Functionally, catalyzes the 2-thiolation of uridine at the wobble position (U34) of tRNA, leading to the formation of s(2)U34. The polypeptide is tRNA-specific 2-thiouridylase MnmA (Xanthobacter autotrophicus (strain ATCC BAA-1158 / Py2)).